A 574-amino-acid polypeptide reads, in one-letter code: Septation ring formation regulator EzrA (574 aa).

The Extracellular segment spans residues 1–7; the sequence is MSIGLVI. A helical transmembrane segment spans residues 8–26; sequence LVAVVALLLVVGYGTAVLM. Coiled coils occupy residues 26 to 47, 105 to 189, 258 to 346, 375 to 415, and 455 to 494; these read MRKR…LYNL, KAKH…QFVT, ESRF…FLIS, SETK…IEKD, and STSN…LEEE. The Cytoplasmic segment spans residues 27 to 574; that stretch reads RKRNEALLQN…YEKTRENIRF (548 aa).

The protein belongs to the EzrA family.

Its subcellular location is the cell membrane. Negative regulator of FtsZ ring formation; modulates the frequency and position of FtsZ ring formation. Inhibits FtsZ ring formation at polar sites. Interacts either with FtsZ or with one of its binding partners to promote depolymerization. This Streptococcus sanguinis (strain SK36) protein is Septation ring formation regulator EzrA.